The primary structure comprises 455 residues: MTKRNAIILAAGKGTRMRSKLYKVLHQVCGKTMVEHVLTQLEKAKIDNIITIVGFGAETVEQQLGHRTKYALQEQQLGTGHAVMQTKDLLANEDGETIIVSGDTPLFTAETFEKLFEYHEQRHAAATILTSIAPDPTGYGRIVRNDVGIVERIVEQKDATVQEQAIKEINTGVYCFDNKKLFAALSKITNDNAQGEYYLTDVIGILKQENEIVTAYKMDNFDESMGVNDRVALARANKVMRNRINTHWMREGVSMIDPETTYIDADVKIGRDTVIEGGVVIKGHTEIGNDCYIGAGSRITDSKIHDGVKIISSTLQEAEMHNGSDIGPNSHLRPEAEIGENVHIGNFCEVKKAYIGEGTKVGHLTYIGNATLGKDINVGCGVVFVNYDGTNKHHTNVGDHAFIGSNSNLVAPVNIAKDSFVAAGSTITDSTEQYDMAIARARQVNKENYAKKLPW.

The segment at 1–230 (MTKRNAIILA…FDESMGVNDR (230 aa)) is pyrophosphorylase. Residues 9–12 (LAAG), Lys23, Gln73, 78–79 (GT), 101–103 (SGD), Gly140, Glu155, Asn170, and Asn228 each bind UDP-N-acetyl-alpha-D-glucosamine. Asp103 serves as a coordination point for Mg(2+). Asn228 contributes to the Mg(2+) binding site. The tract at residues 231–251 (VALARANKVMRNRINTHWMRE) is linker. The segment at 252 to 455 (GVSMIDPETT…KENYAKKLPW (204 aa)) is N-acetyltransferase. UDP-N-acetyl-alpha-D-glucosamine-binding residues include Arg333 and Lys351. Catalysis depends on His363, which acts as the Proton acceptor. Residues Tyr366 and Asn377 each coordinate UDP-N-acetyl-alpha-D-glucosamine. Residues 386–387 (NY), Ser405, Ala423, and Arg440 each bind acetyl-CoA.

This sequence in the N-terminal section; belongs to the N-acetylglucosamine-1-phosphate uridyltransferase family. It in the C-terminal section; belongs to the transferase hexapeptide repeat family. As to quaternary structure, homotrimer. The cofactor is Mg(2+).

It localises to the cytoplasm. It catalyses the reaction alpha-D-glucosamine 1-phosphate + acetyl-CoA = N-acetyl-alpha-D-glucosamine 1-phosphate + CoA + H(+). The enzyme catalyses N-acetyl-alpha-D-glucosamine 1-phosphate + UTP + H(+) = UDP-N-acetyl-alpha-D-glucosamine + diphosphate. It participates in nucleotide-sugar biosynthesis; UDP-N-acetyl-alpha-D-glucosamine biosynthesis; N-acetyl-alpha-D-glucosamine 1-phosphate from alpha-D-glucosamine 6-phosphate (route II): step 2/2. The protein operates within nucleotide-sugar biosynthesis; UDP-N-acetyl-alpha-D-glucosamine biosynthesis; UDP-N-acetyl-alpha-D-glucosamine from N-acetyl-alpha-D-glucosamine 1-phosphate: step 1/1. Its pathway is bacterial outer membrane biogenesis; LPS lipid A biosynthesis. Functionally, catalyzes the last two sequential reactions in the de novo biosynthetic pathway for UDP-N-acetylglucosamine (UDP-GlcNAc). The C-terminal domain catalyzes the transfer of acetyl group from acetyl coenzyme A to glucosamine-1-phosphate (GlcN-1-P) to produce N-acetylglucosamine-1-phosphate (GlcNAc-1-P), which is converted into UDP-GlcNAc by the transfer of uridine 5-monophosphate (from uridine 5-triphosphate), a reaction catalyzed by the N-terminal domain. The polypeptide is Bifunctional protein GlmU (Limosilactobacillus reuteri (strain DSM 20016) (Lactobacillus reuteri)).